The sequence spans 392 residues: Glutamate 5-kinase (392 aa).

ATP is bound at residue Lys17. The substrate site is built by Ser57, Asp144, and Asn156. 176 to 177 (SD) contributes to the ATP binding site. One can recognise a PUA domain in the interval 282–359 (AGILSVDAGA…AEIEALLGYA (78 aa)). Residues 373–392 (TEQTGRKAGKSTKKKDEAHA) are disordered.

The protein belongs to the glutamate 5-kinase family.

The protein localises to the cytoplasm. It catalyses the reaction L-glutamate + ATP = L-glutamyl 5-phosphate + ADP. It participates in amino-acid biosynthesis; L-proline biosynthesis; L-glutamate 5-semialdehyde from L-glutamate: step 1/2. Catalyzes the transfer of a phosphate group to glutamate to form L-glutamate 5-phosphate. This Allorhizobium ampelinum (strain ATCC BAA-846 / DSM 112012 / S4) (Agrobacterium vitis (strain S4)) protein is Glutamate 5-kinase.